A 320-amino-acid polypeptide reads, in one-letter code: Probable L,D-transpeptidase YcfS (320 aa).

Positions 1-23 (MMIKTRFSRWLTFFTFAAAVALA) are cleaved as a signal peptide. One can recognise a LysM domain in the interval 45-90 (KFHVVENDGGSLEAIAKKYNVGFLALLQANPGVDPYVPRAGSVLTI). Residues 102–241 (EGIVINIAEL…VTPGTKVNII (140 aa)) form the L,D-TPase catalytic domain. Residue histidine 201 is the Proton donor/acceptor of the active site. The active-site Nucleophile is cysteine 217.

It belongs to the YkuD family. As to quaternary structure, interacts with DsbG.

The protein resides in the periplasm. Its pathway is cell wall biogenesis; peptidoglycan biosynthesis. In terms of biological role, responsible, at least in part, for anchoring of the major outer membrane lipoprotein (Lpp, also known as the Braun lipoprotein) to the peptidoglycan via a meso-diaminopimelyl-L-Lys- bond on the terminal residue of Lpp. In Escherichia coli (strain K12), this protein is Probable L,D-transpeptidase YcfS (ycfS).